The primary structure comprises 901 residues: MTTQLNINSVIENAKRVITPLSPISIFAARNPWEGLEADTFEDVAKWLRDVRDVDIFPNKALIESAVARGELDESVFNQLVTDMLLEHHYNIPQHYINLYIDNIKTLKDVPASYMNHSNVDVVADLLLEKSKRDMAESYHHYDVRPMSDAIIDEQGEPLSEQVNRQMIKWTKLYIDQFLSSWTMPKREQSFYHAWLHLAQHDHSFTKAQRQVIKGLPNDPEMTIESVLTHFSIDQEDYQAYVEGHLLALPGWAGMLYYRSQQHYFEQHLLTDYLAIRLVVEQLLVGDEFKSVAKDCESRSENWFKQTVASWCYYSDMPSDVLLQHDVNEIQTFIHFAATMNKNVFKNLWLIAWEMTYESQLKQKIKAGHESVAGALDVNQVNVSENDNANQPHSVLLNDTQAVDENNSELNQMGTSTKAQIAFCIDVRSEPFRRHIEAAGPFETIGIAGFFGLPIQKDAVDEQFKHDSLPVMVPPAYRIKEFADRYDMNVYRQQQQTMSSMFYTFKLMKNNVMPSLLLPELSGPFLSLSTIVNSIMPRKSRASLQKIKQKWLKKPETKLTIDREFDRTSDLPVGFTEQEQIDFALQALKLMDLTEAFAPFVVLAGHASHSHNNPHHASLECGACGGASSGFNAKLLAMICNRPNVRQGLKQSGVYIPETTVFAVAEHHTSTDTLAWVYVPDTLSSIALDAYESLNDAMPMISEHANRERLDKLPTIGRVNHPVEEAQRFASDWSEVRPEWGLAKNASFIIGRRQLTKGIDLEGRTFLHNYDWRKDKDGTLLNTIISGPALVAQWINLQYYASTVAPHFYGSGNKATQTVTSGVGVMQGNASDLMYGLSWQSVMAADRTMYHSPIRLLVVIQAPDYVVARLLANNEHFARKVSNHWLRLMSVNEEGRFKSWI.

4 residues coordinate Zn(2+): cysteine 424, aspartate 426, histidine 606, and cysteine 621.

Belongs to the inorganic carbon transporter (TC 9.A.2) DabA family. As to quaternary structure, forms a complex with DabB. The cofactor is Zn(2+).

The protein localises to the cell membrane. Its function is as follows. Part of an energy-coupled inorganic carbon pump. In Staphylococcus aureus (strain USA300), this protein is Probable inorganic carbon transporter subunit DabA.